A 967-amino-acid polypeptide reads, in one-letter code: Phosphoenolpyruvate carboxylase 2 (967 aa).

Ser-13 carries the post-translational modification Phosphoserine. Residues His-174 and Lys-602 contribute to the active site.

Belongs to the PEPCase type 1 family. In terms of assembly, homotetramer. It depends on Mg(2+) as a cofactor.

The protein resides in the cytoplasm. The catalysed reaction is oxaloacetate + phosphate = phosphoenolpyruvate + hydrogencarbonate. The protein operates within photosynthesis; C3 acid pathway. With respect to regulation, by light-reversible phosphorylation. Functionally, through the carboxylation of phosphoenolpyruvate (PEP) it forms oxaloacetate, a four-carbon dicarboxylic acid source for the tricarboxylic acid cycle. In Zea mays (Maize), this protein is Phosphoenolpyruvate carboxylase 2 (PEP4).